The primary structure comprises 273 residues: Orotidine 5'-phosphate decarboxylase (273 aa).

Catalysis depends on Lys95, which acts as the Proton donor.

The protein belongs to the OMP decarboxylase family. Type 2 subfamily.

It carries out the reaction orotidine 5'-phosphate + H(+) = UMP + CO2. The protein operates within pyrimidine metabolism; UMP biosynthesis via de novo pathway; UMP from orotate: step 2/2. In Bordetella bronchiseptica (strain ATCC BAA-588 / NCTC 13252 / RB50) (Alcaligenes bronchisepticus), this protein is Orotidine 5'-phosphate decarboxylase.